Reading from the N-terminus, the 259-residue chain is DNA-directed RNA polymerase 30 kDa polypeptide (259 aa).

The segment at 155–195 (YNTPCPNCKSRNTTPMMIQTRAADEPPLVRHACRDCKQHFK) adopts a TFIIS-type zinc-finger fold. Zn(2+) is bound by residues Cys-159, Cys-162, Cys-187, and Cys-190. Positions 220-259 (EILPDNNPSPPESPEPASPIDDGLIRATFDRNDEPPEDDE) are disordered. Residues 226–236 (NPSPPESPEPA) are compositionally biased toward pro residues.

Belongs to the poxviridae DNA-directed RNA polymerase 30 kDa subunit family. In terms of assembly, the DNA-dependent RNA polymerase (vRNAP) consists of eight subunits encoded by early viral genes and termed according to their apparent molecular masses Rpo147, Rpo132, Rpo35, Rpo30, Rpo22, Rpo19, Rpo18, and Rpo7. The same holoenzyme, with the addition of the transcription-specificity factor RAP94, is used for early gene expression.

It localises to the virion. The protein resides in the host cytoplasm. It carries out the reaction RNA(n) + a ribonucleoside 5'-triphosphate = RNA(n+1) + diphosphate. In terms of biological role, part of the DNA-dependent RNA polymerase which catalyzes the transcription of viral DNA into RNA using the four ribonucleoside triphosphates as substrates. Responsible for the transcription of early, intermediate and late genes. DNA-dependent RNA polymerase associates with the early transcription factor (ETF), itself composed of OPG118 and OPG134, thereby allowing the early genes transcription. Late transcription, and probably also intermediate transcription, require newly synthesized RNA polymerase. This chain is DNA-directed RNA polymerase 30 kDa polypeptide (OPG066), found in Homo sapiens (Human).